Here is a 534-residue protein sequence, read N- to C-terminus: Protein FAM83D (534 aa).

Disordered stretches follow at residues 320–372 (TPPS…STLG) and 501–534 (GLNR…RGLQ). Residues 329-342 (TKPQAERLTSTPAR) are compositionally biased toward polar residues. Positions 350-362 (RMNKDIEEPDRKS) are enriched in basic and acidic residues. The span at 511-520 (EARQPNTNID) shows a compositional bias: polar residues.

This sequence belongs to the FAM83 family.

Its subcellular location is the cytoplasm. The protein resides in the cytoskeleton. It is found in the spindle. The protein localises to the spindle pole. In terms of biological role, may regulate cell proliferation, growth, migration and epithelial to mesenchymal transition. May also be important for proper chromosome congression and alignment during mitosis. This chain is Protein FAM83D, found in Danio rerio (Zebrafish).